The primary structure comprises 359 residues: DNA replication and repair protein RecF (359 aa).

30-37 (GPNGSGKT) contacts ATP.

It belongs to the RecF family.

It is found in the cytoplasm. Its function is as follows. The RecF protein is involved in DNA metabolism; it is required for DNA replication and normal SOS inducibility. RecF binds preferentially to single-stranded, linear DNA. It also seems to bind ATP. In Aliivibrio fischeri (strain ATCC 700601 / ES114) (Vibrio fischeri), this protein is DNA replication and repair protein RecF.